A 502-amino-acid chain; its full sequence is Lysine--tRNA ligase (502 aa).

Residues E411 and E418 each coordinate Mg(2+).

The protein belongs to the class-II aminoacyl-tRNA synthetase family. Homodimer. Requires Mg(2+) as cofactor.

It localises to the cytoplasm. It carries out the reaction tRNA(Lys) + L-lysine + ATP = L-lysyl-tRNA(Lys) + AMP + diphosphate. This chain is Lysine--tRNA ligase, found in Chromohalobacter salexigens (strain ATCC BAA-138 / DSM 3043 / CIP 106854 / NCIMB 13768 / 1H11).